The chain runs to 262 residues: Acyl-coenzyme A diphosphatase FITM2 (262 aa).

Residues 1 to 23 (MEHLERCAWVLRGTLVRSAVRKY) lie on the Cytoplasmic side of the membrane. A helical membrane pass occupies residues 24–44 (LPWALAASMLAGSLLKELSPL). Residues 45 to 57 (PESYLSNKRNVLN) lie on the Lumenal side of the membrane. Residues 58 to 78 (VYFVKVAWAWTFCLLLPFIAL) form a helical membrane-spanning segment. The Cytoplasmic portion of the chain corresponds to 79–93 (TNYHLTGKAGLVLRR). Residues 94 to 114 (LSTLLVGTAIWYVCTAIFSNI) form a helical membrane-spanning segment. At 115-145 (EHYTGSCYQSPALEGERKEHQSKQQCHGEGG) the chain is on the lumenal side. A helical membrane pass occupies residues 146-166 (FWHGFDISGHSFLLTFCALMI). The active site involves H155. The Cytoplasmic portion of the chain corresponds to 167–190 (VEEMAVLHEVKTDRNHCLHAAITT). The chain crosses the membrane as a helical span at residues 191-211 (LVVALGFLTFIWVWMFLCTAV). Over 212–218 (YFHNLSQ) the chain is Lumenal. H214 is a catalytic residue. The helical transmembrane segment at 219–239 (KVFGTLFGLLGWYGTYGCWYL) threads the bilayer. The Cytoplasmic segment spans residues 240–262 (KSFSPGLPPQSSSLNLKQDTYKK).

It belongs to the FIT family. FIT2 subfamily.

It is found in the endoplasmic reticulum membrane. The enzyme catalyses an acyl-CoA + H2O = an acyl-4'-phosphopantetheine + adenosine 3',5'-bisphosphate + 2 H(+). It carries out the reaction (9Z)-octadecenoyl-CoA + H2O = S-(9Z-octadecenoyl)-4'-phosphopantetheine + adenosine 3',5'-bisphosphate + 2 H(+). The catalysed reaction is (5Z,8Z,11Z,14Z)-eicosatetraenoyl-CoA + H2O = S-(5Z,8Z,11Z,14Z-eicosatetraenoyl)-4'-phosphopantetheine + adenosine 3',5'-bisphosphate + 2 H(+). It catalyses the reaction hexadecanoyl-CoA + H2O = S-hexadecanoyl-4'-phosphopantetheine + adenosine 3',5'-bisphosphate + 2 H(+). In terms of biological role, fatty acyl-coenzyme A (CoA) diphosphatase that hydrolyzes fatty acyl-CoA to yield acyl-4'-phosphopantetheine and adenosine 3',5'-bisphosphate. Preferentially hydrolyzes unsaturated long-chain acyl-CoA substrates such as oleoyl-CoA/(9Z)-octadecenoyl-CoA and arachidonoyl-CoA/(5Z,8Z,11Z,14Z)-eicosatetraenoyl-CoA in the endoplasmic reticulum (ER) lumen. This catalytic activity is required for maintaining ER structure and for lipid droplets (LDs) biogenesis, which are lipid storage organelles involved in maintaining lipid and energy homeostasis. Directly binds to diacylglycerol (DAGs) and triacylglycerol, which is also important for LD biogenesis. May support directional budding of nacent LDs from the ER into the cytosol by reducing DAG levels at sites of LD formation. Plays a role in the regulation of cell morphology and cytoskeletal organization. This is Acyl-coenzyme A diphosphatase FITM2 from Bos taurus (Bovine).